The primary structure comprises 379 residues: Ribosomal RNA large subunit methyltransferase G (379 aa).

Belongs to the methyltransferase superfamily. RlmG family.

The protein localises to the cytoplasm. It carries out the reaction guanosine(1835) in 23S rRNA + S-adenosyl-L-methionine = N(2)-methylguanosine(1835) in 23S rRNA + S-adenosyl-L-homocysteine + H(+). Functionally, specifically methylates the guanine in position 1835 (m2G1835) of 23S rRNA. The polypeptide is Ribosomal RNA large subunit methyltransferase G (Serratia proteamaculans (strain 568)).